Reading from the N-terminus, the 298-residue chain is Tyrosine recombinase XerC (298 aa).

In terms of domain architecture, Core-binding (CB) spans 1–84 (MNHIQEAFLN…TLRTFYEYWM (84 aa)). One can recognise a Tyr recombinase domain in the interval 105–286 (YLPQFFYEEE…SNQQLRKVYL (182 aa)). Residues Arg-145, Lys-169, His-238, Arg-241, and His-264 contribute to the active site. Tyr-273 functions as the O-(3'-phospho-DNA)-tyrosine intermediate in the catalytic mechanism.

It belongs to the 'phage' integrase family. XerC subfamily. Forms a cyclic heterotetrameric complex composed of two molecules of XerC and two molecules of XerD.

Its subcellular location is the cytoplasm. Its function is as follows. Site-specific tyrosine recombinase, which acts by catalyzing the cutting and rejoining of the recombining DNA molecules. The XerC-XerD complex is essential to convert dimers of the bacterial chromosome into monomers to permit their segregation at cell division. It also contributes to the segregational stability of plasmids. In Staphylococcus aureus (strain bovine RF122 / ET3-1), this protein is Tyrosine recombinase XerC.